Reading from the N-terminus, the 206-residue chain is Small ribosomal subunit protein uS4 (206 aa).

The region spanning Ser-96–Ala-158 is the S4 RNA-binding domain.

Belongs to the universal ribosomal protein uS4 family. Part of the 30S ribosomal subunit. Contacts protein S5. The interaction surface between S4 and S5 is involved in control of translational fidelity.

Functionally, one of the primary rRNA binding proteins, it binds directly to 16S rRNA where it nucleates assembly of the body of the 30S subunit. Its function is as follows. With S5 and S12 plays an important role in translational accuracy. The protein is Small ribosomal subunit protein uS4 of Coxiella burnetii (strain CbuK_Q154) (Coxiella burnetii (strain Q154)).